A 233-amino-acid chain; its full sequence is Low affinity immunoglobulin gamma Fc region receptor III-B (233 aa).

Positions M1–A16 are cleaved as a signal peptide. 2 Ig-like C2-type domains span residues K40 to L96 and E121 to K179. Residues C47 and C89 are joined by a disulfide bond. N-linked (GlcNAc...) asparagine glycans are attached at residues N56, N63, N82, and N92. A disulfide bridge connects residues C128 and C172. N-linked (GlcNAc...) asparagine glycans are attached at residues N180 and N187. S200 carries the GPI-anchor amidated serine lipid modification. The propeptide at S201–I233 is removed in mature form.

As to quaternary structure, monomer. Interacts with INPP5D/SHIP1. Post-translationally, glycosylated. Glycosylation plays an inhibitory role in the interaction with IgG3. In terms of processing, the soluble form is produced by a proteolytic cleavage. As to expression, expressed specifically by polymorphonuclear leukocytes (neutrophils). Also expressed by stimulated eosinophils.

It is found in the cell membrane. The protein localises to the secreted. In terms of biological role, receptor for the Fc region of immunoglobulins gamma. Low affinity receptor. Binds complexed or aggregated IgG and also monomeric IgG. Contrary to III-A, is not capable to mediate antibody-dependent cytotoxicity and phagocytosis. May serve as a trap for immune complexes in the peripheral circulation which does not activate neutrophils. The sequence is that of Low affinity immunoglobulin gamma Fc region receptor III-B (FCGR3B) from Homo sapiens (Human).